A 2250-amino-acid chain; its full sequence is DNA polymerase epsilon catalytic subunit A (2250 aa).

Disordered regions lie at residues 1-63 (MPSR…GTAA), 235-259 (NGHG…DKEP), and 1990-2010 (PGTE…KAAS). A compositionally biased stretch (gly residues) spans 32–41 (GGGGGGGGVA). Basic and acidic residues predominate over residues 249–259 (DDTKKKKDKEP). The span at 1990-2000 (PGTEATSTMNP) shows a compositional bias: polar residues. Residues Cys-2118, Cys-2121, Cys-2156, and Cys-2159 each contribute to the Zn(2+) site. A CysA-type zinc finger spans residues 2118–2159 (CKKCNAIRDVDLCRDPDRLPSVNPDSGEMLEPARKNWVCHKC). Residues Cys-2190, Cys-2193, Cys-2205, and Cys-2207 each coordinate [4Fe-4S] cluster. The short motif at 2190 to 2207 (CLKCSQTKSDNLAATCKC) is the CysB motif element.

This sequence belongs to the DNA polymerase type-B family. Heterotetramer. Consists of 4 subunits: POL2, DPB2, DPB3 and DPB4. [4Fe-4S] cluster serves as cofactor.

It localises to the nucleus. It carries out the reaction DNA(n) + a 2'-deoxyribonucleoside 5'-triphosphate = DNA(n+1) + diphosphate. DNA polymerase II participates in chromosomal DNA replication. The chain is DNA polymerase epsilon catalytic subunit A (POL2) from Cryptococcus neoformans var. neoformans serotype D (strain JEC21 / ATCC MYA-565) (Filobasidiella neoformans).